Here is a 326-residue protein sequence, read N- to C-terminus: Flotillin-like protein FloA (326 aa).

The chain crosses the membrane as a helical span at residues 3–23; that stretch reads FTTIVVILLVIACIVVLFFIG.

It belongs to the flotillin-like FloA family. Homooligomerizes.

It is found in the cell membrane. It localises to the membrane raft. In terms of biological role, found in functional membrane microdomains (FMM) that may be equivalent to eukaryotic membrane rafts. FMMs are highly dynamic and increase in number as cells age. Flotillins are thought to be important factors in membrane fluidity. The sequence is that of Flotillin-like protein FloA from Desulforapulum autotrophicum (strain ATCC 43914 / DSM 3382 / VKM B-1955 / HRM2) (Desulfobacterium autotrophicum).